The sequence spans 414 residues: Glucose-1-phosphate adenylyltransferase (414 aa).

Alpha-D-glucose 1-phosphate-binding positions include Gly164, 184–185, and Ser204; that span reads EK.

The protein belongs to the bacterial/plant glucose-1-phosphate adenylyltransferase family. Homotetramer.

It catalyses the reaction alpha-D-glucose 1-phosphate + ATP + H(+) = ADP-alpha-D-glucose + diphosphate. It participates in glycan biosynthesis; glycogen biosynthesis. Functionally, involved in the biosynthesis of ADP-glucose, a building block required for the elongation reactions to produce glycogen. Catalyzes the reaction between ATP and alpha-D-glucose 1-phosphate (G1P) to produce pyrophosphate and ADP-Glc. In Acidothermus cellulolyticus (strain ATCC 43068 / DSM 8971 / 11B), this protein is Glucose-1-phosphate adenylyltransferase.